Consider the following 1443-residue polypeptide: ARF guanine-nucleotide exchange factor GNL1 (1443 aa).

Positions 554–743 constitute an SEC7 domain; it reads FVRKVKHIKK…SEIYHSIRHS (190 aa). Residue glutamate 658 is part of the active site. 2 disordered regions span residues 917–949 and 1424–1443; these read DDPE…AMPR and DQFQ…GNEV. The span at 939–949 shows a compositional bias: polar residues; the sequence is VSQSQPSAMPR. Residues 1425–1435 show a composition bias toward basic and acidic residues; sequence QFQRRNAKPED.

In terms of assembly, homodimer.

It localises to the cytoplasm. The protein resides in the cytosol. Its subcellular location is the golgi apparatus membrane. In terms of biological role, activates the ARF proteins by exchanging bound GDP for free GTP. Plays a role in vesicular protein sorting. Acts as the major regulator of retrograde Golgi to endoplasmic reticulum trafficking but is also involved in the endocytosis process. Could function redundantly with GNOM. Regulates vesicle trafficking required for the coordinated polar localization of auxin efflux carriers which in turn determines the direction of auxin flow. Mediates the endocytosis of PIN2 from plasma membrane to endosomal compartments. Required for maintenance of endoplasmic reticulum morphology. This is ARF guanine-nucleotide exchange factor GNL1 (GNL1) from Arabidopsis thaliana (Mouse-ear cress).